A 301-amino-acid chain; its full sequence is Ubiquinone biosynthesis protein COQ4, mitochondrial (301 aa).

The N-terminal 46 residues, 1–46 (MEVTLKRSAALARQTTPLLRPLRPVATYPSNNNNNNNPTPQQRRPY), are a transit peptide targeting the mitochondrion. The interval 14–48 (QTTPLLRPLRPVATYPSNNNNNNNPTPQQRRPYSL) is disordered. The span at 38-48 (PTPQQRRPYSL) shows a compositional bias: polar residues. Positions 185, 186, 189, and 201 each coordinate Zn(2+).

This sequence belongs to the COQ4 family. As to quaternary structure, component of a multi-subunit COQ enzyme complex, composed of at least COQ3, COQ4, COQ5, COQ6, COQ7 and COQ9. It depends on Zn(2+) as a cofactor.

It localises to the mitochondrion inner membrane. It carries out the reaction a 4-hydroxy-3-methoxy-5-(all-trans-polyprenyl)benzoate + H(+) = a 2-methoxy-6-(all-trans-polyprenyl)phenol + CO2. It functions in the pathway cofactor biosynthesis; ubiquinone biosynthesis. In terms of biological role, lyase that catalyzes the C1-decarboxylation of 4-hydroxy-3-methoxy-5-(all-trans-polyprenyl)benzoic acid into 2-methoxy-6-(all-trans-polyprenyl)phenol during ubiquinone biosynthesis. In Podospora anserina (strain S / ATCC MYA-4624 / DSM 980 / FGSC 10383) (Pleurage anserina), this protein is Ubiquinone biosynthesis protein COQ4, mitochondrial.